The following is a 118-amino-acid chain: Small ribosomal subunit protein uS13 (118 aa).

Positions 94-118 are disordered; that stretch reads SLPLRGQRTKTNARTRKGPRKPIKK.

Belongs to the universal ribosomal protein uS13 family. In terms of assembly, part of the 30S ribosomal subunit. Forms a loose heterodimer with protein S19. Forms two bridges to the 50S subunit in the 70S ribosome.

Located at the top of the head of the 30S subunit, it contacts several helices of the 16S rRNA. In the 70S ribosome it contacts the 23S rRNA (bridge B1a) and protein L5 of the 50S subunit (bridge B1b), connecting the 2 subunits; these bridges are implicated in subunit movement. Contacts the tRNAs in the A and P-sites. This Vibrio vulnificus (strain CMCP6) protein is Small ribosomal subunit protein uS13.